Here is a 209-residue protein sequence, read N- to C-terminus: 60S ribosomal subunit assembly/export protein loc-1 (209 aa).

2 disordered regions span residues 1–53 and 135–209; these read MAPT…SKGR and REAR…AAPE. Composition is skewed to basic and acidic residues over residues 20-33 and 135-159; these read GSKD…DGVL and REAR…TKDS. A coiled-coil region spans residues 126–170; sequence IKARQMEEIREARRAEAEKKEAERKARLEETKDSLRKKRKRSKQS.

This sequence belongs to the LOC1 family. In terms of assembly, component of the 66S pre-ribosomal particle.

The protein resides in the nucleus. Its subcellular location is the nucleolus. Functionally, required for efficient assembly and nuclear export of the 60S ribosomal subunit. The polypeptide is 60S ribosomal subunit assembly/export protein loc-1 (loc-1) (Neurospora crassa (strain ATCC 24698 / 74-OR23-1A / CBS 708.71 / DSM 1257 / FGSC 987)).